The sequence spans 204 residues: Leucyl/phenylalanyl-tRNA--protein transferase (204 aa).

The protein belongs to the L/F-transferase family.

It is found in the cytoplasm. The catalysed reaction is N-terminal L-lysyl-[protein] + L-leucyl-tRNA(Leu) = N-terminal L-leucyl-L-lysyl-[protein] + tRNA(Leu) + H(+). The enzyme catalyses N-terminal L-arginyl-[protein] + L-leucyl-tRNA(Leu) = N-terminal L-leucyl-L-arginyl-[protein] + tRNA(Leu) + H(+). It catalyses the reaction L-phenylalanyl-tRNA(Phe) + an N-terminal L-alpha-aminoacyl-[protein] = an N-terminal L-phenylalanyl-L-alpha-aminoacyl-[protein] + tRNA(Phe). Its function is as follows. Functions in the N-end rule pathway of protein degradation where it conjugates Leu, Phe and, less efficiently, Met from aminoacyl-tRNAs to the N-termini of proteins containing an N-terminal arginine or lysine. This Rhizobium meliloti (strain 1021) (Ensifer meliloti) protein is Leucyl/phenylalanyl-tRNA--protein transferase.